The sequence spans 223 residues: Ribonuclease 3 (223 aa).

The RNase III domain maps to 1-131 (MDGVDELLLR…LIGAVMVDQG (131 aa)). Position 44 (Glu44) interacts with Mg(2+). The active site involves Asp48. Residues Asp117 and Glu120 each coordinate Mg(2+). Residue Glu120 is part of the active site. The DRBM domain maps to 157-220 (DPKTKLQKLT…AMSALASLEN (64 aa)).

The protein belongs to the ribonuclease III family. In terms of assembly, homodimer. It depends on Mg(2+) as a cofactor.

Its subcellular location is the cytoplasm. It carries out the reaction Endonucleolytic cleavage to 5'-phosphomonoester.. Its function is as follows. Digests double-stranded RNA. Involved in the processing of primary rRNA transcript to yield the immediate precursors to the large and small rRNAs (23S and 16S). Processes some mRNAs, and tRNAs when they are encoded in the rRNA operon. Processes pre-crRNA and tracrRNA of type II CRISPR loci if present in the organism. The chain is Ribonuclease 3 from Tropheryma whipplei (strain Twist) (Whipple's bacillus).